A 178-amino-acid chain; its full sequence is Large ribosomal subunit protein uL13m (178 aa).

S2 is subject to N-acetylserine.

This sequence belongs to the universal ribosomal protein uL13 family. In terms of assembly, component of the mitochondrial large ribosomal subunit (mt-LSU). Mature mammalian 55S mitochondrial ribosomes consist of a small (28S) and a large (39S) subunit. The 28S small subunit contains a 12S ribosomal RNA (12S mt-rRNA) and 30 different proteins. The 39S large subunit contains a 16S rRNA (16S mt-rRNA), a copy of mitochondrial valine transfer RNA (mt-tRNA(Val)), which plays an integral structural role, and 52 different proteins. Interacts with OXA1L.

The protein localises to the mitochondrion. The sequence is that of Large ribosomal subunit protein uL13m (MRPL13) from Homo sapiens (Human).